A 782-amino-acid chain; its full sequence is Small RNA degrading nuclease 3 (782 aa).

The Exonuclease domain occupies 145–296; the sequence is MLSIDCEMVT…HDAAAAMKLV (152 aa). Residues 331–410 enclose the RRM 1 domain; the sequence is AQLFLHKIPH…KKAVLKLSSG (80 aa). A disordered region spans residues 426–464; the sequence is PCEISTSERARAEENNVSSKRQKTEDETEETKEATVNQR. Residues 469–549 form the RRM 2 domain; it reads TKLFLHKIPH…KMVVFKLSSG (81 aa). Residues 563–605 form a disordered region; the sequence is DSPGEISTTKRARTEESNMSSKRQKTEDESEETKEANAKQREA. Residues 577 to 605 adopt a coiled-coil conformation; sequence EESNMSSKRQKTEDESEETKEANAKQREA. The span at 595-605 shows a compositional bias: basic and acidic residues; the sequence is TKEANAKQREA. Residues 608 to 688 form the RRM 3 domain; the sequence is TKLLLHKIPL…KMVAFKLSSG (81 aa). Residues 709 to 779 are a coiled coil; it reads ANANHCEDDH…KMKLEKKQSK (71 aa).

Belongs to the REXO1/REXO3 family. Associated with the Mediator complex.

It is found in the nucleus. Its function is as follows. 3'-5' exonuclease degrading single-stranded small RNAs. This chain is Small RNA degrading nuclease 3 (SDN3), found in Arabidopsis thaliana (Mouse-ear cress).